The following is a 130-amino-acid chain: Protein lgg-2 (130 aa).

A lipid anchor (Phosphatidylethanolamine amidated glycine) is attached at Gly-130.

This sequence belongs to the ATG8 family. In terms of assembly, may interact with vps-39. Interacts with lgg-3; the interaction is direct. Interacts with atg-16.1 (via WD domain) and atg-16.2 (via WD 5-6 repeats); the interactions are direct. Interacts with sepa-1 (via the LIR motifs); the interaction is direct. Interacts with sqst-1 (via the LIR motifs); the interaction is direct. Interacts with epg-2 (via the LIR motifs); the interaction is weak. Interacts with atg-7; the interaction is direct. Interacts with atg-3. The interaction with atg-7 and atg-3 may be required for the lipidation of lgg-2. In terms of processing, this protein is subject to lipidation. Lipidation is regulated by lgg-1.

It localises to the cytoplasmic vesicle. The protein resides in the autophagosome. The protein localises to the cytoplasm. It is found in the cell membrane. Its function is as follows. Ubiquitin-like modifier involved in the formation of autophagosomal vacuoles (autophagosomes). When lipidated mediates tethering between adjacent membranes and stimulates membrane fusion. Less effective at promoting membrane fusion than lgg-1. Acts upstream of the autophagy protein epg-5 in the aggrephagy pathway, which is the macroautophagic degradation of ubiquitinated protein aggregates, and preferentially interacts with autophagy proteins and substrates containing LIR motifs to mediate autophagosome formation and protein aggregate degradation. In particular binds to components of an atg-5-lgg-3-atg-16 complex to regulate autophagosome formation and cargo sequestration. Required for the degradation of specific sqst-1-containing aggregates during embryogenesis and the early stages of larval development. Involved in allophagy, which is an autophagic process in which paternal mitochondria and organelles are degraded during fertilization, and moreover is required for the degradation of lgg-1-positive allophagic autophagosomes in embryos. Involved in xenophagy, the autophagy-mediated degradation of pathogens and pathogen products, such as toxins. Also plays a role in membrane-pore repair. Through HOPS complex subunit vps-39, tethers lysosomes with autophagosomes to form autolysosomes. Plays a role in the distribution and clearance of germ cell specific P-granules from somatic cells to ensure exclusive localization of the P-granules in germ cells. Essential for dauer development and life-span extension. The chain is Protein lgg-2 from Caenorhabditis elegans.